Here is a 129-residue protein sequence, read N- to C-terminus: UPF0102 protein RD1_1191 (129 aa).

This sequence belongs to the UPF0102 family.

This chain is UPF0102 protein RD1_1191, found in Roseobacter denitrificans (strain ATCC 33942 / OCh 114) (Erythrobacter sp. (strain OCh 114)).